Consider the following 295-residue polypeptide: uncharacterized protein (295 aa).

The 58-residue stretch at 1–58 (MESGDLRVFQMVAREGTITKAALQLGYVQSNVTARIQQLEAELGTTLFLRHNRGMTLS) folds into the HTH lysR-type domain. The segment at residues 18–37 (ITKAALQLGYVQSNVTARIQ) is a DNA-binding region (H-T-H motif).

Belongs to the LysR transcriptional regulatory family.

This is an uncharacterized protein from Bacillus subtilis (strain 168).